The following is a 470-amino-acid chain: Tryptophan synthase beta chain 1, chloroplastic (470 aa).

A compositionally biased stretch (polar residues) spans 1–10 (MAASGTSATF). The interval 1–24 (MAASGTSATFRASVSSAPSSSSQL) is disordered. Residues 12-22 (ASVSSAPSSSS) show a composition bias toward low complexity. Lys165 is modified (N6-(pyridoxal phosphate)lysine).

It belongs to the TrpB family. As to quaternary structure, tetramer of two alpha and two beta chains. It depends on pyridoxal 5'-phosphate as a cofactor.

The protein resides in the plastid. It is found in the chloroplast. The enzyme catalyses (1S,2R)-1-C-(indol-3-yl)glycerol 3-phosphate + L-serine = D-glyceraldehyde 3-phosphate + L-tryptophan + H2O. The protein operates within amino-acid biosynthesis; L-tryptophan biosynthesis; L-tryptophan from chorismate: step 5/5. Functionally, the beta subunit is responsible for the synthesis of L-tryptophan from indole and L-serine. In Arabidopsis thaliana (Mouse-ear cress), this protein is Tryptophan synthase beta chain 1, chloroplastic (TSB1).